The primary structure comprises 164 residues: UPF0114 protein YqhA (164 aa).

Helical transmembrane passes span Tyr-10 to Leu-32, Leu-53 to Phe-75, and Leu-136 to Tyr-155.

Belongs to the UPF0114 family.

It is found in the cell membrane. In Salmonella typhi, this protein is UPF0114 protein YqhA.